The following is a 219-amino-acid chain: Probable cutinase 4 (219 aa).

Residues 1–17 form the signal peptide; it reads MILPSLLVASLSALAAA. 2 cysteine pairs are disulfide-bonded: Cys41–Cys120 and Cys67–Cys81. Asn99 is a glycosylation site (N-linked (GlcNAc...) asparagine). The active-site Nucleophile is the Ser131. A disulfide bridge connects residues Cys182 and Cys189. The active site involves Asp186. His199 serves as the catalytic Proton donor/acceptor.

Belongs to the cutinase family.

It localises to the secreted. The catalysed reaction is cutin + H2O = cutin monomers.. Catalyzes the hydrolysis of complex carboxylic polyesters found in the cell wall of plants. Degrades cutin, a macromolecule that forms the structure of the plant cuticle. This is Probable cutinase 4 from Aspergillus terreus (strain NIH 2624 / FGSC A1156).